The primary structure comprises 68 residues: Protein SrnB (68 aa).

The helical transmembrane segment at 23-42 (YALIGLLAVCATVLCFSLIF) threads the bilayer.

This sequence belongs to the Hok/Gef family.

It is found in the cell inner membrane. Toxic component of a type I toxin-antitoxin (TA) system. Its normal function is believed to be effective plasmid stabilization through postsegregational killing of cells that have lost the F plasmid. Promotes degradation of stable RNA in E.coli. The chain is Protein SrnB (srnB) from Escherichia coli (strain K12).